Reading from the N-terminus, the 276-residue chain is Small ribosomal subunit protein uS2 (276 aa).

Disordered regions lie at residues 209 to 233 and 252 to 276; these read AQEAAAAAQAAKETAEPTTEGAADV and VDWSAEGAQDWAADGAAEQATSSWE. Residues 211–231 show a composition bias toward low complexity; the sequence is EAAAAAQAAKETAEPTTEGAA.

This sequence belongs to the universal ribosomal protein uS2 family. As to quaternary structure, component of the small ribosomal subunit. Mature ribosomes consist of a small (40S) and a large (60S) subunit. The 40S subunit contains about 33 different proteins and 1 molecule of RNA (18S). The 60S subunit contains about 49 different proteins and 3 molecules of RNA (25S, 5.8S and 5S). Interacts with RPS21.

It localises to the cytoplasm. Required for the assembly and/or stability of the 40S ribosomal subunit. Required for the processing of the 20S rRNA-precursor to mature 18S rRNA in a late step of the maturation of 40S ribosomal subunits. The chain is Small ribosomal subunit protein uS2 from Mycosarcoma maydis (Corn smut fungus).